We begin with the raw amino-acid sequence, 209 residues long: MIKVKICGITNLEDALLAVDAGADALGFVFCEASPRSVTPEQAASIIRQLPPFIQTIGLFVNEPLAVINQTADACGLDIVQLHGEEAPQFCAGVKRRVIKALRVRDESSLEPMTSYRVSAFLLDAWSPSAHGGTGRTFNWDIAAGAAAKNRIVLAGGLTADNIAAAIRKVHPYGVDVSSGVEAAPGKKDAVKIREFIRIAKETRSESTR.

This sequence belongs to the TrpF family.

The catalysed reaction is N-(5-phospho-beta-D-ribosyl)anthranilate = 1-(2-carboxyphenylamino)-1-deoxy-D-ribulose 5-phosphate. It functions in the pathway amino-acid biosynthesis; L-tryptophan biosynthesis; L-tryptophan from chorismate: step 3/5. The protein is N-(5'-phosphoribosyl)anthranilate isomerase of Pelobacter propionicus (strain DSM 2379 / NBRC 103807 / OttBd1).